A 112-amino-acid chain; its full sequence is Low molecular weight protein antigen 6 (112 aa).

It localises to the secreted. This is Low molecular weight protein antigen 6 (cfp6) from Mycobacterium bovis (strain ATCC BAA-935 / AF2122/97).